Reading from the N-terminus, the 314-residue chain is Ribosomal RNA small subunit methyltransferase H (314 aa).

S-adenosyl-L-methionine contacts are provided by residues 34–36 (GGH), Asp-54, Phe-83, Asp-104, and Gln-111.

Belongs to the methyltransferase superfamily. RsmH family.

It is found in the cytoplasm. It carries out the reaction cytidine(1402) in 16S rRNA + S-adenosyl-L-methionine = N(4)-methylcytidine(1402) in 16S rRNA + S-adenosyl-L-homocysteine + H(+). Specifically methylates the N4 position of cytidine in position 1402 (C1402) of 16S rRNA. This Ligilactobacillus salivarius (strain UCC118) (Lactobacillus salivarius) protein is Ribosomal RNA small subunit methyltransferase H.